Consider the following 152-residue polypeptide: SsrA-binding protein (152 aa).

It belongs to the SmpB family.

It is found in the cytoplasm. Functionally, required for rescue of stalled ribosomes mediated by trans-translation. Binds to transfer-messenger RNA (tmRNA), required for stable association of tmRNA with ribosomes. tmRNA and SmpB together mimic tRNA shape, replacing the anticodon stem-loop with SmpB. tmRNA is encoded by the ssrA gene; the 2 termini fold to resemble tRNA(Ala) and it encodes a 'tag peptide', a short internal open reading frame. During trans-translation Ala-aminoacylated tmRNA acts like a tRNA, entering the A-site of stalled ribosomes, displacing the stalled mRNA. The ribosome then switches to translate the ORF on the tmRNA; the nascent peptide is terminated with the 'tag peptide' encoded by the tmRNA and targeted for degradation. The ribosome is freed to recommence translation, which seems to be the essential function of trans-translation. This chain is SsrA-binding protein, found in Gloeobacter violaceus (strain ATCC 29082 / PCC 7421).